A 298-amino-acid polypeptide reads, in one-letter code: Oligodendrocyte transcription factor 2 (298 aa).

A compositionally biased stretch (polar residues) spans Met-1 to Ser-13. Disordered stretches follow at residues Met-1–Leu-60 and Ser-79–Pro-102. The segment covering Asn-26–Gly-41 has biased composition (gly residues). Residues Ser-79–Ser-91 show a composition bias toward low complexity. The 55-residue stretch at Gln-106–Leu-160 folds into the bHLH domain.

It is found in the nucleus. Functionally, required for oligodendrocyte and motor neuron specification in the spinal cord. This chain is Oligodendrocyte transcription factor 2 (OLIG2), found in Gallus gallus (Chicken).